A 560-amino-acid polypeptide reads, in one-letter code: DNA ligase B (560 aa).

The active-site N6-AMP-lysine intermediate is the K124.

The protein belongs to the NAD-dependent DNA ligase family. LigB subfamily.

It catalyses the reaction NAD(+) + (deoxyribonucleotide)n-3'-hydroxyl + 5'-phospho-(deoxyribonucleotide)m = (deoxyribonucleotide)n+m + AMP + beta-nicotinamide D-nucleotide.. Functionally, catalyzes the formation of phosphodiester linkages between 5'-phosphoryl and 3'-hydroxyl groups in double-stranded DNA using NAD as a coenzyme and as the energy source for the reaction. This is DNA ligase B from Escherichia coli O6:K15:H31 (strain 536 / UPEC).